The primary structure comprises 138 residues: Large ribosomal subunit protein bL19 (138 aa).

Belongs to the bacterial ribosomal protein bL19 family.

In terms of biological role, this protein is located at the 30S-50S ribosomal subunit interface and may play a role in the structure and function of the aminoacyl-tRNA binding site. The protein is Large ribosomal subunit protein bL19 of Rickettsia massiliae (strain Mtu5).